An 832-amino-acid polypeptide reads, in one-letter code: FAST kinase domain-containing protein 1, mitochondrial (832 aa).

An RAP domain is found at 765–825 (VAIEFLDSKA…KDAWIDYLRK (61 aa)).

Belongs to the FAST kinase family.

It is found in the mitochondrion. Its function is as follows. May regulate the stability of some mitochondrial mRNA species. This chain is FAST kinase domain-containing protein 1, mitochondrial (fastkd1), found in Xenopus tropicalis (Western clawed frog).